Reading from the N-terminus, the 372-residue chain is AA9 family lytic polysaccharide monooxygenase C (372 aa).

The first 16 residues, 1–16, serve as a signal peptide directing secretion; sequence MFRSALFLLLAPLALS. Cu(2+) contacts are provided by His-17 and His-99. Cys-59 and Cys-189 form a disulfide bridge. Residues His-174 and Gln-184 each coordinate O2. Tyr-186 provides a ligand contact to Cu(2+).

This sequence belongs to the polysaccharide monooxygenase AA9 family. It depends on Cu(2+) as a cofactor.

The protein localises to the secreted. It carries out the reaction [(1-&gt;4)-beta-D-glucosyl]n+m + reduced acceptor + O2 = 4-dehydro-beta-D-glucosyl-[(1-&gt;4)-beta-D-glucosyl]n-1 + [(1-&gt;4)-beta-D-glucosyl]m + acceptor + H2O.. Functionally, lytic polysaccharide monooxygenase (LPMO) that depolymerizes crystalline and amorphous polysaccharides via the oxidation of scissile alpha- or beta-(1-4)-glycosidic bonds, yielding C1 or C4 oxidation products. Catalysis by LPMOs requires the reduction of the active-site copper from Cu(II) to Cu(I) by a reducing agent and H(2)O(2) or O(2) as a cosubstrate. The protein is AA9 family lytic polysaccharide monooxygenase C of Aspergillus tamarii.